Here is a 511-residue protein sequence, read N- to C-terminus: Maturase K (511 aa).

The protein belongs to the intron maturase 2 family. MatK subfamily.

The protein localises to the plastid. Its subcellular location is the chloroplast. Its function is as follows. Usually encoded in the trnK tRNA gene intron. Probably assists in splicing its own and other chloroplast group II introns. The sequence is that of Maturase K from Melica altissima (Siberian melic grass).